We begin with the raw amino-acid sequence, 445 residues long: von Willebrand factor A domain-containing protein 1 (445 aa).

An N-terminal signal peptide occupies residues 1 to 22 (MLPWTALGLALSLRLALARSGA). Positions 34-213 (DLMFLLDSSA…ELRGSILDAM (180 aa)) constitute a VWFA domain. Phosphoserine; by FAM20C is present on residues Ser-74 and Ser-80. Phosphotyrosine is present on Tyr-83. Phosphoserine; by FAM20C is present on Ser-93. The Fibronectin type-III 1 domain occupies 214 to 304 (RPQQLHATEI…QILRVRTRPG (91 aa)). A glycan (N-linked (GlcNAc...) asparagine) is linked at Asn-264. Disordered regions lie at residues 302-325 (RPGEAGPGASGPESGAGPAPTQLA) and 411-445 (RESALSAKACTPDGPRPRPRPVPRAPTPGTASREP). The span at 311-325 (SGPESGAGPAPTQLA) shows a compositional bias: low complexity. The region spanning 334–427 (GPERIVISHA…KACTPDGPRP (94 aa)) is the Fibronectin type-III 2 domain.

As to quaternary structure, homodimer or homomultimer; disulfide-linked. Interacts with HSPG2. N-glycosylated.

It is found in the secreted. The protein resides in the extracellular space. It localises to the extracellular matrix. The protein localises to the basement membrane. Functionally, promotes matrix assembly. Involved in the organization of skeletal muscles and in the formation of neuromuscular junctions. The sequence is that of von Willebrand factor A domain-containing protein 1 from Homo sapiens (Human).